A 417-amino-acid polypeptide reads, in one-letter code: Queuine tRNA-ribosyltransferase accessory subunit 2 (417 aa).

Zn(2+)-binding residues include C324, C326, C329, and H355.

Belongs to the queuine tRNA-ribosyltransferase family. QTRT2 subfamily. Heterodimer of a catalytic subunit and an accessory subunit. Zn(2+) is required as a cofactor.

It localises to the cytoplasm. Its function is as follows. Non-catalytic subunit of the queuine tRNA-ribosyltransferase (TGT) that catalyzes the base-exchange of a guanine (G) residue with queuine (Q) at position 34 (anticodon wobble position) in tRNAs with GU(N) anticodons (tRNA-Asp, -Asn, -His and -Tyr), resulting in the hypermodified nucleoside queuosine (7-(((4,5-cis-dihydroxy-2-cyclopenten-1-yl)amino)methyl)-7-deazaguanosine). The polypeptide is Queuine tRNA-ribosyltransferase accessory subunit 2 (Drosophila pseudoobscura pseudoobscura (Fruit fly)).